The sequence spans 311 residues: Ribonuclease Z (311 aa).

The Zn(2+) site is built by H61, H63, D65, H66, H148, D216, and H275. The active-site Proton acceptor is the D65.

This sequence belongs to the RNase Z family. Homodimer. Zn(2+) serves as cofactor.

The enzyme catalyses Endonucleolytic cleavage of RNA, removing extra 3' nucleotides from tRNA precursor, generating 3' termini of tRNAs. A 3'-hydroxy group is left at the tRNA terminus and a 5'-phosphoryl group is left at the trailer molecule.. Zinc phosphodiesterase, which displays some tRNA 3'-processing endonuclease activity. Probably involved in tRNA maturation, by removing a 3'-trailer from precursor tRNA. This Clostridium novyi (strain NT) protein is Ribonuclease Z.